The sequence spans 240 residues: 1-(5-phosphoribosyl)-5-[(5-phosphoribosylamino)methylideneamino] imidazole-4-carboxamide isomerase (240 aa).

Residue Asp9 is the Proton acceptor of the active site. Asp131 acts as the Proton donor in catalysis.

It belongs to the HisA/HisF family.

It is found in the cytoplasm. It carries out the reaction 1-(5-phospho-beta-D-ribosyl)-5-[(5-phospho-beta-D-ribosylamino)methylideneamino]imidazole-4-carboxamide = 5-[(5-phospho-1-deoxy-D-ribulos-1-ylimino)methylamino]-1-(5-phospho-beta-D-ribosyl)imidazole-4-carboxamide. Its pathway is amino-acid biosynthesis; L-histidine biosynthesis; L-histidine from 5-phospho-alpha-D-ribose 1-diphosphate: step 4/9. The protein is 1-(5-phosphoribosyl)-5-[(5-phosphoribosylamino)methylideneamino] imidazole-4-carboxamide isomerase of Cytophaga hutchinsonii (strain ATCC 33406 / DSM 1761 / CIP 103989 / NBRC 15051 / NCIMB 9469 / D465).